The following is a 41-amino-acid chain: uncharacterized protein (41 aa).

The protein localises to the plastid. It is found in the chloroplast. This is an uncharacterized protein from Trieres chinensis (Marine centric diatom).